Reading from the N-terminus, the 84-residue chain is MVIIRLARGGSKKRPFYNIVATDSRNRRDGRFIERVGFYNPVATKGEALRIAQDRLTYWQGVGAQLSPTVERLVKQAQKAQPAA.

This sequence belongs to the bacterial ribosomal protein bS16 family.

This Burkholderia mallei (strain NCTC 10247) protein is Small ribosomal subunit protein bS16.